Reading from the N-terminus, the 427-residue chain is Enolase (427 aa).

A (2R)-2-phosphoglycerate-binding site is contributed by Q163. The active-site Proton donor is the E205. Residues D242, E283, and D310 each contribute to the Mg(2+) site. K335, R364, S365, and K386 together coordinate (2R)-2-phosphoglycerate. The active-site Proton acceptor is the K335.

The protein belongs to the enolase family. It depends on Mg(2+) as a cofactor.

The protein localises to the cytoplasm. It is found in the secreted. Its subcellular location is the cell surface. The enzyme catalyses (2R)-2-phosphoglycerate = phosphoenolpyruvate + H2O. Its pathway is carbohydrate degradation; glycolysis; pyruvate from D-glyceraldehyde 3-phosphate: step 4/5. In terms of biological role, catalyzes the reversible conversion of 2-phosphoglycerate (2-PG) into phosphoenolpyruvate (PEP). It is essential for the degradation of carbohydrates via glycolysis. This Salinispora tropica (strain ATCC BAA-916 / DSM 44818 / JCM 13857 / NBRC 105044 / CNB-440) protein is Enolase.